Consider the following 243-residue polypeptide: Carboxy-S-adenosyl-L-methionine synthase (243 aa).

S-adenosyl-L-methionine-binding positions include Y40, 65–67 (GSS), 90–91 (DN), 118–119 (DI), N133, and R200.

Belongs to the class I-like SAM-binding methyltransferase superfamily. Cx-SAM synthase family. Homodimer.

The enzyme catalyses prephenate + S-adenosyl-L-methionine = carboxy-S-adenosyl-L-methionine + 3-phenylpyruvate + H2O. Its function is as follows. Catalyzes the conversion of S-adenosyl-L-methionine (SAM) to carboxy-S-adenosyl-L-methionine (Cx-SAM). This chain is Carboxy-S-adenosyl-L-methionine synthase, found in Shewanella denitrificans (strain OS217 / ATCC BAA-1090 / DSM 15013).